An 848-amino-acid chain; its full sequence is MNLEITGTSAEYWSDLAEALNTPMMKQFLTIKKDFPDTILFFRMGDFYEMFLEDAKIASSILDIALTKRQNAVPMCGIPYHSKDNYISRLLNAGKKIAICEQSKPEETGSKLMTRDVVRIITPGTVIEENLLTGFQNNYLAVLHLKKSLIYFAMADFSTGELFYSSTPITSLEKLVAELEKFRPSEICVPQSELSFFQELEYFRDKEFTVLKDQPEIPEKDQFQILSRYLDEYIRETYRDNKLVLREPRILSSGKFLEMDRETILNLELVENGKEKNHTLYSIFNFCNTAKGKRLLKQRILFPECDPMVLYSRWEKQDILFKIVLAPFIAALRDVGDIERILTRFRGNHSYPRDFRSILNSISTGIKLKKELEALSYPFLIPLEELKVLSEFIEERLHPGDDLPVILGNGPFLKTGFSTRLDKAREAGFKGKDWILSLEAEEKKRTNLNTLKIRYNKIVGYFIEISRAQAEQAPKDYLKKQTLVGSERFTTPKLEEIERTILEADEIIQEIERAEFNRMVEEVLKYSSALLSFSEEIGDLDFQISVLIAKDKFGWIRPELSKDRSLNLVDSRHPVVEATLPPGQEFVPNSVYLDTQNQAIAVLTGPNMAGKSTFMRQIALNQILFQMGAFVPAKSARLPIVDKLFTRIGAGDNLTAGESTFYVEMKETANILNHYTEDSLILFDEVGRGTSTYDGMSIAWSILEYLSSLSVKPKTIFATHYHELTELSRLSGIFNLYLETLEKEDKVLFLRKVKVGKAKKSFGIYVAKIAGIPEPIVKRAAELLIDLESKKKEIRIQEAQPTLFIEPESKNLPSETEESILKLKLEEMTPMEALKKLEDFQKKLRKQK.

605–612 (GPNMAGKS) is an ATP binding site.

It belongs to the DNA mismatch repair MutS family.

In terms of biological role, this protein is involved in the repair of mismatches in DNA. It is possible that it carries out the mismatch recognition step. This protein has a weak ATPase activity. The protein is DNA mismatch repair protein MutS of Leptospira borgpetersenii serovar Hardjo-bovis (strain JB197).